Reading from the N-terminus, the 274-residue chain is Phloretin hydrolase (274 aa).

Histidine 123, glutamate 154, histidine 251, and glutamate 255 together coordinate Zn(2+).

Belongs to the DAPG/phloretin hydrolase family. As to quaternary structure, homodimer. Zn(2+) serves as cofactor.

It is found in the cytoplasm. It carries out the reaction phloretin + H2O = phloretate + 1,3,5-trihydroxybenzene + H(+). Catalyzes the hydrolytic C-C cleavage of phloretin to phloroglucinol and 3-(4-hydroxyphenyl)propionic acid during flavonoid degradation. Also hydrolyzes other C-acylated phenols. The chain is Phloretin hydrolase (phy) from Eubacterium ramulus.